The primary structure comprises 261 residues: Probable cyclic nucleotide phosphodiesterase PSM_A2567 (261 aa).

Fe cation is bound by residues aspartate 22, histidine 24, aspartate 62, asparagine 94, histidine 160, histidine 198, and histidine 200. AMP is bound by residues histidine 24, aspartate 62, and 94 to 95; that span reads NH. Histidine 200 provides a ligand contact to AMP.

It belongs to the cyclic nucleotide phosphodiesterase class-III family. Fe(2+) is required as a cofactor.

The polypeptide is Probable cyclic nucleotide phosphodiesterase PSM_A2567 (Pseudoalteromonas sp. (strain SM9913)).